A 95-amino-acid polypeptide reads, in one-letter code: DNA/RNA-binding protein Alba (95 aa).

Lysine 13 bears the N6-acetyllysine mark.

It belongs to the histone-like Alba family. Post-translationally, acetylated. Acetylation at Lys-13 decreases DNA-binding affinity.

It localises to the cytoplasm. The protein resides in the chromosome. Functionally, binds double-stranded DNA tightly but without sequence specificity. Involved in DNA compaction. This Nitrosopumilus maritimus (strain SCM1) protein is DNA/RNA-binding protein Alba.